The sequence spans 186 residues: MIALFNKLLDWFKALFWKEEMELTLVGLQYSGKTTFVNVIASGQFNEDMIPTVGFNMRKITKGNVTIKLWDIGGQPRFRSMWERYCRGVSAIVYMVDAADQEKIEASKNELHNLLDKPQLQGIPVLVLGNKRDLAGALDEKELIEKMNLSAIQDREICCYSISCKEKDNIDITLQWLIQHSKSRRS.

Positions 1-19 (MIALFNKLLDWFKALFWKE) form an intramembrane region, note=Mediates targeting to membranes. GTP is bound by residues 29 to 35 (QYSGKTT), 71 to 75 (DIGGQ), and 130 to 133 (NKRD).

It belongs to the small GTPase superfamily. Arf family. In terms of assembly, interacts with PLEKHM1. When GTP-bound, interacts with RUFY3 and RUFY4, but not with RUFY1, nor RUFY2.

It localises to the late endosome membrane. Its subcellular location is the lysosome membrane. The protein resides in the cytoplasm. It is found in the cytoskeleton. The protein localises to the spindle. It localises to the cell projection. Its subcellular location is the axon. The protein resides in the synapse. In terms of biological role, plays a role in lysosomes motility. In neurons, mediates the anterograde axonal long-range transport of presynaptic lysosome-related vesicles required for presynaptic biogenesis and synaptic function. May play a role in chromosome segregation. The protein is ADP-ribosylation factor-like protein 8A (Arl8a) of Mus musculus (Mouse).